The following is a 410-amino-acid chain: Lissencephaly-1 homolog (410 aa).

One can recognise a LisH domain in the interval 7-39 (QRDELNRAIADYLRSNGYEEAYSVFKKEAELDM). Residues 56–82 (TSVIRLQKKVMELESKLNEAKEEFTSG) adopt a coiled-coil conformation. WD repeat units follow at residues 106–147 (GHRS…RTLK), 148–189 (GHTD…RTMH), 190–229 (GHDH…CVKT), 232–271 (GHRE…CKAE), 274–333 (EHEH…CLMT), 336–377 (GHDN…KTLN), and 379–410 (HEHF…WECR).

The protein belongs to the WD repeat LIS1/nudF family. Can self-associate. Component of the cytosolic PAF-AH (I) heterotetrameric enzyme, which is composed of PAFAH1B1 (beta), PAFAH1B2 (alpha2) and PAFAH1B3 (alpha1) subunits. The catalytic activity of the enzyme resides in the alpha1 (PAFAH1B3) and alpha2 (PAFAH1B2) subunits, whereas the beta subunit (PAFAH1B1) has regulatory activity. Trimer formation is not essential for the catalytic activity. Interacts with dynein, dynactin, nde1 and ndel1.

The protein localises to the cytoplasm. It localises to the cytoskeleton. The protein resides in the microtubule organizing center. It is found in the centrosome. Its function is as follows. Regulatory subunit (beta subunit) of the cytosolic type I platelet-activating factor (PAF) acetylhydrolase (PAF-AH (I)), an enzyme that catalyzes the hydrolyze of the acetyl group at the sn-2 position of PAF and its analogs and participates in PAF inactivation. Regulates the PAF-AH (I) activity in a catalytic dimer composition-dependent manner. Positively regulates the activity of the minus-end directed microtubule motor protein dynein. May enhance dynein-mediated microtubule sliding by targeting dynein to the microtubule plus end. Required for several dynein- and microtubule-dependent processes such as the maintenance of Golgi integrity, the peripheral transport of microtubule fragments and the coupling of the nucleus and centrosome. May be required for proliferation of neuronal precursors and neuronal migration. The chain is Lissencephaly-1 homolog (pafah1b1) from Xenopus laevis (African clawed frog).